The following is a 173-amino-acid chain: Alpha-crystallin A chain (173 aa).

Methionine 1 carries the N-acetylmethionine modification. A required for complex formation with BFSP1 and BFSP2 region spans residues 1 to 63 (MDIAIQHPWF…RTVLDSGISE (63 aa)). Glutamine 6 carries the post-translational modification Deamidated glutamine; partial. Serine 45 carries the post-translational modification Phosphoserine. Glutamine 50 is modified (deamidated glutamine; partial). In terms of domain architecture, sHSP spans 52–162 (LFRTVLDSGI…GHSERAIPVS (111 aa)). Lysine 70 carries the N6-acetyllysine modification. Glutamine 90 carries the post-translational modification Deamidated glutamine; partial. Residue lysine 99 is modified to N6-acetyllysine. Histidine 100 serves as a coordination point for Zn(2+). Asparagine 101 is modified (deamidated asparagine; partial). Zn(2+) contacts are provided by glutamate 102 and histidine 107. Serine 122 bears the Phosphoserine mark. The residue at position 123 (asparagine 123) is a Deamidated asparagine; partial. The interval 144 to 173 (PKVPSGMDAGHSERAIPVSREEKPSSAPSS) is disordered. Basic and acidic residues predominate over residues 153–167 (GHSERAIPVSREEKP). Histidine 154 contacts Zn(2+). Serine 162 is a glycosylation site (O-linked (GlcNAc) serine).

This sequence belongs to the small heat shock protein (HSP20) family. As to quaternary structure, heteromer composed of three CRYAA and one CRYAB subunits. Inter-subunit bridging via zinc ions enhances stability, which is crucial as there is no protein turn over in the lens. Can also form homodimers and homotetramers (dimers of dimers) which serve as the building blocks of homooligomers. Within homooligomers, the zinc-binding motif is created from residues of 3 different molecules. His-100 and Glu-102 from one molecule are ligands of the zinc ion, and His-107 and His-154 residues from additional molecules complete the site with tetrahedral coordination geometry. Part of a complex required for lens intermediate filament formation composed of BFSP1, BFSP2 and CRYAA. Post-translationally, acetylation at Lys-70 may increase chaperone activity. In terms of processing, undergoes age-dependent proteolytical cleavage at the C-terminus.

It is found in the cytoplasm. It localises to the nucleus. In terms of biological role, contributes to the transparency and refractive index of the lens. Acts as a chaperone, preventing aggregation of various proteins under a wide range of stress conditions. Required for the correct formation of lens intermediate filaments as part of a complex composed of BFSP1, BFSP2 and CRYAA. The protein is Alpha-crystallin A chain (CRYAA) of Balaenoptera acutorostrata (Common minke whale).